Consider the following 122-residue polypeptide: Large ribosomal subunit protein bL12 (122 aa).

The protein belongs to the bacterial ribosomal protein bL12 family. Homodimer. Part of the ribosomal stalk of the 50S ribosomal subunit. Forms a multimeric L10(L12)X complex, where L10 forms an elongated spine to which 2 to 4 L12 dimers bind in a sequential fashion. Binds GTP-bound translation factors.

In terms of biological role, forms part of the ribosomal stalk which helps the ribosome interact with GTP-bound translation factors. Is thus essential for accurate translation. The polypeptide is Large ribosomal subunit protein bL12 (Xylella fastidiosa (strain M12)).